The sequence spans 410 residues: Elongation factor Tu, chloroplastic (410 aa).

One can recognise a tr-type G domain in the interval 10–214; sequence KPHINIGTIG…QVDKYIPTPQ (205 aa). The interval 19–26 is G1; sequence GHVDHGKT. Position 19-26 (19-26) interacts with GTP; sequence GHVDHGKT. Residue Thr26 coordinates Mg(2+). The segment at 60-64 is G2; the sequence is GITIN. A G3 region spans residues 81–84; it reads DCPG. GTP-binding positions include 81 to 85 and 136 to 139; these read DCPGH and NKED. The interval 136–139 is G4; the sequence is NKED. Residues 174-176 are G5; sequence SAL.

The protein belongs to the TRAFAC class translation factor GTPase superfamily. Classic translation factor GTPase family. EF-Tu/EF-1A subfamily.

Its subcellular location is the plastid. The protein localises to the chloroplast. It carries out the reaction GTP + H2O = GDP + phosphate + H(+). GTP hydrolase that promotes the GTP-dependent binding of aminoacyl-tRNA to the A-site of ribosomes during protein biosynthesis. The sequence is that of Elongation factor Tu, chloroplastic (tufA) from Mesostigma viride (Green alga).